The chain runs to 187 residues: Aminodeoxychorismate synthase component 2 (187 aa).

Residues 1-187 enclose the Glutamine amidotransferase type-1 domain; sequence MILLIDNYDS…HQLLANFLNR (187 aa). Residues C79, H168, and E170 contribute to the active site.

In terms of assembly, monomer. Heterodimer consisting of two non-identical subunits: a glutamine amidotransferase subunit (PabA) and a aminodeoxychorismate synthase subunit (PabB).

The enzyme catalyses chorismate + L-glutamine = 4-amino-4-deoxychorismate + L-glutamate. The protein operates within cofactor biosynthesis; tetrahydrofolate biosynthesis; 4-aminobenzoate from chorismate: step 1/2. Part of a heterodimeric complex that catalyzes the two-step biosynthesis of 4-amino-4-deoxychorismate (ADC), a precursor of p-aminobenzoate (PABA) and tetrahydrofolate. In the first step, a glutamine amidotransferase (PabA) generates ammonia as a substrate that, along with chorismate, is used in the second step, catalyzed by aminodeoxychorismate synthase (PabB) to produce ADC. PabA converts glutamine into glutamate only in the presence of stoichiometric amounts of PabB. This Klebsiella aerogenes (Enterobacter aerogenes) protein is Aminodeoxychorismate synthase component 2 (pabA).